A 368-amino-acid polypeptide reads, in one-letter code: Zinc finger protein 24 (368 aa).

Residue lysine 22 forms a Glycyl lysine isopeptide (Lys-Gly) (interchain with G-Cter in SUMO2) linkage. Residue lysine 27 forms a Glycyl lysine isopeptide (Lys-Gly) (interchain with G-Cter in SUMO1); alternate linkage. Lysine 27 is covalently cross-linked (Glycyl lysine isopeptide (Lys-Gly) (interchain with G-Cter in SUMO2); alternate). In terms of domain architecture, SCAN box spans 52–134; that stretch reads RQRFRQFGYQ…TVLEDLESEL (83 aa). Serine 132 and serine 142 each carry phosphoserine. Glycyl lysine isopeptide (Lys-Gly) (interchain with G-Cter in SUMO2) cross-links involve residues lysine 147, lysine 177, and lysine 236. The segment at 251 to 273 adopts a C2H2-type 1 zinc-finger fold; sequence HICDECGKHFSQGSALILHQRIH. The interval 251 to 301 is necessary and sufficient for nuclear localization; it reads HICDECGKHFSQGSALILHQRIHSGEKPYGCVECGKAFSRSSILVQHQRVH. Residue serine 274 is modified to Phosphoserine. Glycyl lysine isopeptide (Lys-Gly) (interchain with G-Cter in SUMO2) cross-links involve residues lysine 277 and lysine 286. 3 C2H2-type zinc fingers span residues 279–301, 307–329, and 335–357; these read YGCV…QRVH, YKCL…QRIH, and YECV…QRRH. A Phosphoserine modification is found at serine 292. The residue at position 335 (tyrosine 335) is a Phosphotyrosine. Glycyl lysine isopeptide (Lys-Gly) (interchain with G-Cter in SUMO2) cross-links involve residues lysine 361 and lysine 367.

It belongs to the krueppel C2H2-type zinc-finger protein family. Post-translationally, sumoylated.

It localises to the nucleus. Transcription factor required for myelination of differentiated oligodendrocytes. Required for the conversion of oligodendrocytes from the premyelinating to the myelinating state. In the developing central nervous system (CNS), involved in the maintenance in the progenitor stage by promoting the cell cycle. Specifically binds to the 5'-TCAT-3' DNA sequence. Has transcription repressor activity in vitro. The chain is Zinc finger protein 24 (Znf24) from Rattus norvegicus (Rat).